Reading from the N-terminus, the 343-residue chain is N-acetyl-gamma-glutamyl-phosphate reductase (343 aa).

The active site involves Cys147.

This sequence belongs to the NAGSA dehydrogenase family. Type 1 subfamily.

It is found in the cytoplasm. It catalyses the reaction N-acetyl-L-glutamate 5-semialdehyde + phosphate + NADP(+) = N-acetyl-L-glutamyl 5-phosphate + NADPH + H(+). The protein operates within amino-acid biosynthesis; L-arginine biosynthesis; N(2)-acetyl-L-ornithine from L-glutamate: step 3/4. Functionally, catalyzes the NADPH-dependent reduction of N-acetyl-5-glutamyl phosphate to yield N-acetyl-L-glutamate 5-semialdehyde. The chain is N-acetyl-gamma-glutamyl-phosphate reductase from Listeria monocytogenes serotype 4a (strain HCC23).